Here is a 171-residue protein sequence, read N- to C-terminus: Co-chaperone protein HscB (171 aa).

Positions 2 to 74 (DYFTLFGLPA…LARAEYLLSL (73 aa)) constitute a J domain.

This sequence belongs to the HscB family. As to quaternary structure, interacts with HscA and stimulates its ATPase activity. Interacts with IscU.

In terms of biological role, co-chaperone involved in the maturation of iron-sulfur cluster-containing proteins. Seems to help targeting proteins to be folded toward HscA. The polypeptide is Co-chaperone protein HscB (Enterobacter sp. (strain 638)).